A 134-amino-acid polypeptide reads, in one-letter code: GLIGAPIAAPLGYAAPFARAAVAAPVAVAKTVVADEYDPHPQYSYGYDIQDGLTGDSKNQQETRDGDVVQGSYSLVDPDGTRRTVEYTADPINGFNAVVHREPLVAKAVVAAPAIAKVHAPLAYGAPVAKYAFH.

The stretch at 23–26 is repeat 1; sequence AAPV. The segment at 38 to 80 is disordered; it reads DPHPQYSYGYDIQDGLTGDSKNQQETRDGDVVQGSYSLVDPDG. A Chitin-binding type R&amp;R domain is found at 40 to 106; sequence HPQYSYGYDI…AVVHREPLVA (67 aa). Copy 2 of the repeat occupies 111–114; sequence AAPA.

In terms of biological role, component of the cuticle of the larva of Tenebrio molitor. This Tenebrio molitor (Yellow mealworm beetle) protein is Larval cuticle protein A3A.